We begin with the raw amino-acid sequence, 129 residues long: uncharacterized protein (129 aa).

3 helical membrane-spanning segments follow: residues 22–42 (LASS…FFFF), 55–75 (VGSF…FFFF), and 88–108 (LPFT…FFFF).

The protein localises to the membrane. This is an uncharacterized protein from Saccharomyces cerevisiae (strain ATCC 204508 / S288c) (Baker's yeast).